A 390-amino-acid polypeptide reads, in one-letter code: MTSQEHPNWLTALLVDTRPPPKLFAWSPANIQPKLDEGIDMGSSNSDEEYDNDACVCQSTDSDQRIYIIGPGNIGRLYATHMARHPNALPITLVVHRKELLSQWVACEGVGLADITSGKLFLNKGFTVEWWTETRPPYGPVKEVADGKKLHNVFISTKAEAGLAEADRIRRYLGRCSSVVFAQNGVCKLWPPHGPLYISHRYPSGDTPTFSACVVSHGVASAGPFLSVHAAPADAYIGPVFWASDPESPWRHPSDDFFIRHIATTPHVNTKQVSSGEIWLLQLEKLVMNAAINPLTALLRCKTGELFTSYGSDDPLALVIDKLLWQTSAVIQGLVDHKTSHSVITSYAEHMSQPGTSCSVPKVRKKLMERFSQPILKAKLGWEEDRDTGL.

70 to 75 serves as a coordination point for NADP(+); it reads GPGNIG. Lys-285 (proton donor) is an active-site residue. Positions 289 and 293 each coordinate substrate.

The protein belongs to the ketopantoate reductase family.

It carries out the reaction (R)-2-hydroxy-3-methylbutanoate + NADP(+) = 3-methyl-2-oxobutanoate + NADPH + H(+). Its activity is regulated as follows. The reductase activity is increased by Mg(2+) (195%), Ca(2+) (169%) and slightly increased by K(+) (123%). The reduction activity is inhibited by Fe(2+) and Co(2+), and almost totally inhibited by Cu(2+), Mn(2+), Zn(2+) and Fe(3+) (from 3% to 9% residual activity respectively). The chelating agent EDTA had little effect, suggesting Mg(2+) and Ca(2+) are not determining factors, though they could promote the reductase enzyme activity. In terms of biological role, ketoisovalerate reductase; part of the gene cluster that mediates the biosynthesis of beauvericin (BEA), a non-ribosomal cyclic hexadepsipeptide that shows antibiotic, antifungal, insecticidal, and cancer cell antiproliferative and antihaptotactic activity. Ketoisovalerate reductase BEA2 catalyzes the NADPH-specific reduction of ketoisovaleric acid to hydroxyisovalerate, a precursor for beauvericin biosynthesis. The nonribosomal cyclodepsipeptide synthetase BEA1 then catalyzes the formation of beauvericin via condensation and cyclization of 3 dipeptidol monomers, each composed of one unit of hydroxyisovalerate and one unit of N-methyl-phenylalanine. This is Ketoisovalerate reductase BEA2 from Gibberella intermedia (Bulb rot disease fungus).